An 877-amino-acid polypeptide reads, in one-letter code: DNA polymerase I (877 aa).

The region spanning 177 to 270 (TPAQFIDLKA…LEDLVYSGPD (94 aa)) is the 5'-3' exonuclease domain. Residues 302–465 (DFTIVDQISQ…TEPILLEKLS (164 aa)) enclose the 3'-5' exonuclease domain.

Belongs to the DNA polymerase type-A family. As to quaternary structure, single-chain monomer with multiple functions.

The enzyme catalyses DNA(n) + a 2'-deoxyribonucleoside 5'-triphosphate = DNA(n+1) + diphosphate. Functionally, in addition to polymerase activity, this DNA polymerase exhibits 3'-5' and 5'-3' exonuclease activity. The chain is DNA polymerase I (polA) from Streptococcus pneumoniae (strain ATCC BAA-255 / R6).